Reading from the N-terminus, the 335-residue chain is Nucleoid-associated protein Pput_1012 (335 aa).

The protein belongs to the YejK family.

Its subcellular location is the cytoplasm. The protein localises to the nucleoid. The polypeptide is Nucleoid-associated protein Pput_1012 (Pseudomonas putida (strain ATCC 700007 / DSM 6899 / JCM 31910 / BCRC 17059 / LMG 24140 / F1)).